A 292-amino-acid chain; its full sequence is 4-hydroxy-tetrahydrodipicolinate synthase (292 aa).

Pyruvate is bound at residue Thr45. Tyr133 acts as the Proton donor/acceptor in catalysis. The Schiff-base intermediate with substrate role is filled by Lys161. Ile203 is a pyruvate binding site.

Belongs to the DapA family. As to quaternary structure, homotetramer; dimer of dimers.

It localises to the cytoplasm. The enzyme catalyses L-aspartate 4-semialdehyde + pyruvate = (2S,4S)-4-hydroxy-2,3,4,5-tetrahydrodipicolinate + H2O + H(+). Its pathway is amino-acid biosynthesis; L-lysine biosynthesis via DAP pathway; (S)-tetrahydrodipicolinate from L-aspartate: step 3/4. Functionally, catalyzes the condensation of (S)-aspartate-beta-semialdehyde [(S)-ASA] and pyruvate to 4-hydroxy-tetrahydrodipicolinate (HTPA). The protein is 4-hydroxy-tetrahydrodipicolinate synthase of Salmonella arizonae (strain ATCC BAA-731 / CDC346-86 / RSK2980).